Here is a 993-residue protein sequence, read N- to C-terminus: Lateral signaling target protein 2 homolog (993 aa).

4 disordered regions span residues 340 to 449 (DQRN…DTTD), 494 to 623 (DGYG…TVVQ), 759 to 813 (GARH…GDQE), and 825 to 902 (AVNE…PPAW). Positions 343–360 (NNNNNINNNSSSSSNSNS) are enriched in low complexity. Residues 372 to 405 (RSPSMLSLSTASPTPSHSIGSTFSAATSSTNPPV) show a composition bias toward polar residues. A compositionally biased stretch (acidic residues) spans 409–448 (DGDDADDDDDGDDDDEDDDDDVDDDLVGNDDSDDDDDDTT). Phosphoserine is present on residues Ser525 and Ser526. Positions 535-549 (SHNNTTTIKSPDSDG) are enriched in polar residues. Residues 559-608 (SRQRHSHHHHRHHHHHHRHSSHSSHSHHHQHQQHHSQPHPHRTTRSGRKR) show a composition bias toward basic residues. A compositionally biased stretch (low complexity) spans 759–801 (GARHSAGASMQRNHTTIDNNNSTSSSPPDATITTTTTTTTTRS). The residue at position 808 (Ser808) is a Phosphoserine. 2 stretches are compositionally biased toward low complexity: residues 842 to 862 (SNTPSSASSSATSSSSEQNSP) and 884 to 896 (TTATTTTTTGTGT). The FYVE-type zinc-finger motif lies at 905–965 (DGKAPRCMSC…VCRDCYAREI (61 aa)). Zn(2+)-binding residues include Cys911, Cys914, Cys927, Cys930, Cys935, Cys938, Cys957, and Cys960. The tract at residues 968 to 993 (SGGGGGGVVQMQRQQAANRPQTASAS) is disordered. Over residues 978 to 993 (MQRQQAANRPQTASAS) the composition is skewed to polar residues.

It belongs to the lst-2 family.

Functionally, negative regulator of epidermal growth factor receptor (EGFR) signaling. In Drosophila willistoni (Fruit fly), this protein is Lateral signaling target protein 2 homolog.